We begin with the raw amino-acid sequence, 275 residues long: Hydroxyethylthiazole kinase (275 aa).

M50 contacts substrate. The ATP site is built by R126 and S171. A200 is a substrate binding site.

Belongs to the Thz kinase family. Mg(2+) is required as a cofactor.

The enzyme catalyses 5-(2-hydroxyethyl)-4-methylthiazole + ATP = 4-methyl-5-(2-phosphooxyethyl)-thiazole + ADP + H(+). It participates in cofactor biosynthesis; thiamine diphosphate biosynthesis; 4-methyl-5-(2-phosphoethyl)-thiazole from 5-(2-hydroxyethyl)-4-methylthiazole: step 1/1. In terms of biological role, catalyzes the phosphorylation of the hydroxyl group of 4-methyl-5-beta-hydroxyethylthiazole (THZ). The polypeptide is Hydroxyethylthiazole kinase (Acinetobacter baumannii (strain AB307-0294)).